A 1838-amino-acid chain; its full sequence is Collagen alpha-1(V) chain (1838 aa).

An N-terminal signal peptide occupies residues 1 to 37 (MDVHTRWKARSALRPGAPLLPPLLLLLLWAPPPSRAA). The 173-residue stretch at 72-244 (DVAYRVTKDA…DYCEHYSPDC (173 aa)) folds into the Laminin G-like domain. The tract at residues 231–443 (RAAYDYCEHY…MPANQDTIYE (213 aa)) is nonhelical region. Sulfotyrosine occurs at positions 234, 236, 240, 262, and 263. Disordered regions lie at residues 242–269 (PDCDTAVPDTPQSQDPNPDEYYTEGDGE), 281–457 (EDPE…QKGE), 470–520 (PPGP…GTML), 526–545 (FGGGGDAGSKGPMVSAQESQ), and 559–1574 (GPAG…EVIQ). The segment covering 258–269 (NPDEYYTEGDGE) has biased composition (acidic residues). The segment covering 285 to 304 (DLGKEPTPSKKPVEAAKETT) has biased composition (basic and acidic residues). Residues 309-323 (ELTPTPTEAAPMPET) are compositionally biased toward low complexity. A sulfotyrosine mark is found at Tyr338, Tyr340, Tyr346, and Tyr347. Residues 377–388 (PTSTADTSNSSN) are compositionally biased toward polar residues. Over residues 396–406 (GADDLEGEFTE) the composition is skewed to acidic residues. Residues Tyr416, Tyr417, Tyr420, and Tyr421 each carry the sulfotyrosine modification. The segment covering 417–428 (YDPYYDPTSSPS) has biased composition (low complexity). The tract at residues 444–558 (GIGGPRGEKG…ILQQARLALR (115 aa)) is interrupted collagenous region. The span at 470–485 (PPGPEGPAGLPGPPGT) shows a compositional bias: pro residues. Low complexity predominate over residues 506–520 (LPGADGLPGPPGTML). The segment at 559-1570 (GPAGPMGLTG…GPPGPPGPPG (1012 aa)) is triple-helical region. A hydroxyproline mark is found at Pro570 and Pro576. The span at 587 to 597 (DVGPQGPRGVQ) shows a compositional bias: low complexity. The residue at position 621 (Pro621) is a Hydroxyproline. Lys627 is subject to 5-hydroxylysine. Pro639 carries the hydroxyproline modification. Lys642 carries the 5-hydroxylysine modification. Residues Pro648, Pro654, Pro657, Pro675, and Pro678 each carry the hydroxyproline modification. Residues 671 to 686 (PRGLPGEPGPRGLLGP) show a composition bias toward low complexity. 5-hydroxylysine is present on Lys687. The segment covering 687–696 (KGPPGPPGPP) has biased composition (pro residues). Hydroxyproline occurs at positions 690, 696, and 705. Lys708 is subject to 5-hydroxylysine. Hydroxyproline occurs at positions 717, 720, 726, and 732. A compositionally biased stretch (low complexity) spans 722 to 741 (QQGNPGAQGLPGPQGAIGPP). The residue at position 744 (Lys744) is a 5-hydroxylysine. A compositionally biased stretch (low complexity) spans 747–756 (LGKPGLPGMP). Hydroxyproline occurs at positions 750, 756, 762, 765, and 771. At Lys774 the chain carries 5-hydroxylysine. Hydroxyproline occurs at positions 780 and 789. 5-hydroxylysine occurs at positions 795, 804, 807, and 810. Pro816 bears the Hydroxyproline mark. Lys819 bears the 5-hydroxylysine mark. Pro834 is subject to Hydroxyproline. Residues 837 to 846 (RGEDGPEGPK) show a composition bias toward basic and acidic residues. The residue at position 846 (Lys846) is a 5-hydroxylysine. At Pro861 the chain carries Hydroxyproline. A 5-hydroxylysine modification is found at Lys864. Residues 867–876 (LGVPGLPGYP) are compositionally biased toward low complexity. Hydroxyproline occurs at positions 870, 873, and 876. The residue at position 882 (Lys882) is a 5-hydroxylysine. A hydroxyproline mark is found at Pro888 and Pro891. Lys897 carries the post-translational modification 5-hydroxylysine. Hydroxyproline is present on residues Pro903 and Pro906. Low complexity predominate over residues 908-917 (PRGQRGPTGP). Pro930 and Pro945 each carry hydroxyproline. Low complexity-rich tracts occupy residues 971 to 990 (KDGLPGHPGQRGETGFQGKT) and 999 to 1011 (VGPQGPTGETGPM). Pro1017, Pro1020, Pro1023, and Pro1029 each carry hydroxyproline. A compositionally biased stretch (low complexity) spans 1088-1104 (SPGERGPAGAAGPIGIP). A compositionally biased stretch (pro residues) spans 1106 to 1115 (RPGPQGPPGP). The segment covering 1116–1140 (AGEKGAPGEKGPQGPAGRDGLQGPV) has biased composition (low complexity). Hydroxyproline occurs at positions 1221 and 1224. A compositionally biased stretch (low complexity) spans 1259 to 1268 (PSGAPGADGP). 2 stretches are compositionally biased toward pro residues: residues 1380–1398 (TGEPGPSGPPGKRGPPGPA) and 1454–1469 (SPGPDGPPGPMGPPGL). 2 positions are modified to hydroxyproline: Pro1467 and Pro1470. Residues 1485–1494 (PGLIGLIGPP) show a composition bias toward low complexity. Over residues 1526–1541 (PIGPPGPPGLPGPPGP) the composition is skewed to pro residues. Residues 1542–1554 (KGAKGSSGPTGPK) show a composition bias toward low complexity. Positions 1560-1569 (PGPPGPPGPP) are enriched in pro residues. Residues 1571-1605 (EVIQPLPIQASRTRRNIDASQLLDDGNGENYVDYA) form a nonhelical region region. Residues Tyr1601 and Tyr1604 each carry the sulfotyrosine modification. The propeptide at 1606-1838 (DGMEEIFGSL…FEVGPACFMG (233 aa)) is C-terminal propeptide. The 229-residue stretch at 1609 to 1837 (EEIFGSLNSL…GFEVGPACFM (229 aa)) folds into the Fibrillar collagen NC1 domain. 3 disulfides stabilise this stretch: Cys1639/Cys1671, Cys1680/Cys1835, and Cys1746/Cys1789. Ca(2+) is bound by residues Asp1657, Asn1659, Gln1660, Cys1662, and Asp1665.

This sequence belongs to the fibrillar collagen family. Trimers of two alpha 1(V) and one alpha 2(V) chains in most tissues and trimers of one alpha 1(V), one alpha 2(V), and one alpha 3(V) chains in placenta. Interacts with CSPG4. In terms of processing, prolines at the third position of the tripeptide repeating unit (G-X-Y) are hydroxylated in some or all of the chains. Sulfated on 40% of tyrosines.

Its subcellular location is the secreted. It is found in the extracellular space. It localises to the extracellular matrix. Type V collagen is a member of group I collagen (fibrillar forming collagen). It is a minor connective tissue component of nearly ubiquitous distribution. Type V collagen binds to DNA, heparan sulfate, thrombospondin, heparin, and insulin. The polypeptide is Collagen alpha-1(V) chain (COL5A1) (Homo sapiens (Human)).